The chain runs to 413 residues: Putative F-box/kelch-repeat protein At3g22870 (413 aa).

The 52-residue stretch at 2-53 (TLTISDLPRDLKKKIFSRIPLRYVRALRLTCKEWETLIKSRSLKIDEEESQM) folds into the F-box domain. Kelch repeat units lie at residues 156 to 202 (LLRF…IGVS) and 331 to 379 (KVFI…RRRQ).

The chain is Putative F-box/kelch-repeat protein At3g22870 from Arabidopsis thaliana (Mouse-ear cress).